The primary structure comprises 348 residues: D-alanine--D-alanine ligase (348 aa).

Residues 132-334 enclose the ATP-grasp domain; it reads KRVLESAGIP…YSDLIEELVS (203 aa). 162–217 is an ATP binding site; sequence LETLSFPIFVKPANMGSSVGISKAESIEGLREAIALALKYDSRILIEQGVVAREIE. Residues Asp-288, Glu-301, and Asn-303 each coordinate Mg(2+).

Belongs to the D-alanine--D-alanine ligase family. It depends on Mg(2+) as a cofactor. The cofactor is Mn(2+).

The protein resides in the cytoplasm. It carries out the reaction 2 D-alanine + ATP = D-alanyl-D-alanine + ADP + phosphate + H(+). Its pathway is cell wall biogenesis; peptidoglycan biosynthesis. Its function is as follows. Cell wall formation. In Streptococcus uberis (strain ATCC BAA-854 / 0140J), this protein is D-alanine--D-alanine ligase.